Here is a 96-residue protein sequence, read N- to C-terminus: Large ribosomal subunit protein bL27 (96 aa).

A propeptide spanning residues 1–9 (MLRLDLQFF) is cleaved from the precursor.

This sequence belongs to the bacterial ribosomal protein bL27 family. In terms of processing, the N-terminus is cleaved by ribosomal processing cysteine protease Prp.

This chain is Large ribosomal subunit protein bL27, found in Geobacillus sp. (strain WCH70).